Reading from the N-terminus, the 345-residue chain is MESTASAVPPSSEDLVADTKENNQPPFCGTTVSGSSQAPLHPHSPTLQQDEREELTLHQSGEQQLGNSGELRQEEELPKARRGGWNKGRKRKRSPRDNNAPKAPLTGYVRFMNERREQLRTERPDVPFPEITRIVGSEWSKLPAHEKQHYLDEAEKDKERYTKELQKYQNTDAYQTYSRKAKSRQKGRQQRQEGVRGVPSNTEKESILKERPIFDIPIFTEEFLNHSKAREAELRQLRKSNMEFEERNAALQKHVESMRSAVQRLEAELSQEHERNSLLQQHLQSVRQALTHCLQSVPVPGTTETPTLETIDLYMSRLQNAVLTHPKESEVIISGVREVLSQLEG.

2 disordered regions span residues 1 to 130 (MEST…PFPE) and 166 to 206 (QKYQ…EKES). Polar residues-rich tracts occupy residues 22 to 38 (NNQP…SSQA) and 57 to 67 (LHQSGEQQLGN). Residues 80 to 94 (ARRGGWNKGRKRKRS) show a composition bias toward basic residues. The segment at residues 101-169 (PKAPLTGYVR…RYTKELQKYQ (69 aa)) is a DNA-binding region (HMG box). Basic and acidic residues predominate over residues 112–125 (MNERREQLRTERPD). Residues 167–178 (KYQNTDAYQTYS) are compositionally biased toward polar residues. Basic residues predominate over residues 179-189 (RKAKSRQKGRQ). A coiled-coil region spans residues 227-285 (SKAREAELRQLRKSNMEFEERNAALQKHVESMRSAVQRLEAELSQEHERNSLLQQHLQS).

It localises to the nucleus. Its function is as follows. Plays a role in neuronal differentiation. The sequence is that of High mobility group protein 20A (hmg20a) from Xenopus laevis (African clawed frog).